We begin with the raw amino-acid sequence, 503 residues long: ATP synthase subunit alpha (503 aa).

170–177 (GDKQTGKT) is an ATP binding site.

Belongs to the ATPase alpha/beta chains family. F-type ATPases have 2 components, CF(1) - the catalytic core - and CF(0) - the membrane proton channel. CF(1) has five subunits: alpha(3), beta(3), gamma(1), delta(1), epsilon(1). CF(0) has three main subunits: a(1), b(2) and c(9-12). The alpha and beta chains form an alternating ring which encloses part of the gamma chain. CF(1) is attached to CF(0) by a central stalk formed by the gamma and epsilon chains, while a peripheral stalk is formed by the delta and b chains.

The protein resides in the cell inner membrane. The enzyme catalyses ATP + H2O + 4 H(+)(in) = ADP + phosphate + 5 H(+)(out). Its function is as follows. Produces ATP from ADP in the presence of a proton gradient across the membrane. The alpha chain is a regulatory subunit. The protein is ATP synthase subunit alpha of Helicobacter pylori (strain HPAG1).